Here is a 1040-residue protein sequence, read N- to C-terminus: Multidrug resistance protein MdtB (1040 aa).

12 consecutive transmembrane segments (helical) span residues Phe-16–Ile-36, Leu-347–Ala-367, Ile-369–Leu-389, Leu-396–Ile-416, Ile-440–Phe-460, Phe-472–Pro-492, Trp-537–Ile-557, Leu-863–Ile-883, Phe-888–Ala-908, Ile-911–Val-931, Ile-968–Val-988, and Ile-998–Ile-1018.

The protein belongs to the resistance-nodulation-cell division (RND) (TC 2.A.6) family. MdtB subfamily. As to quaternary structure, part of a tripartite efflux system composed of MdtA, MdtB and MdtC. MdtB forms a heteromultimer with MdtC.

Its subcellular location is the cell inner membrane. Its function is as follows. The MdtABC tripartite complex confers resistance against novobiocin and deoxycholate. The protein is Multidrug resistance protein MdtB of Escherichia coli O81 (strain ED1a).